The primary structure comprises 165 residues: Cyclic pyranopterin monophosphate synthase (165 aa).

Residues 83–85 (FCH) and 120–121 (ME) contribute to the substrate site. Residue D135 is part of the active site.

It belongs to the MoaC family. As to quaternary structure, homohexamer; trimer of dimers.

It catalyses the reaction (8S)-3',8-cyclo-7,8-dihydroguanosine 5'-triphosphate = cyclic pyranopterin phosphate + diphosphate. It participates in cofactor biosynthesis; molybdopterin biosynthesis. Catalyzes the conversion of (8S)-3',8-cyclo-7,8-dihydroguanosine 5'-triphosphate to cyclic pyranopterin monophosphate (cPMP). In Xanthomonas oryzae pv. oryzae (strain MAFF 311018), this protein is Cyclic pyranopterin monophosphate synthase.